Reading from the N-terminus, the 551-residue chain is uncharacterized protein (551 aa).

Transmembrane regions (helical) follow at residues 1 to 21 (MIAY…IVNS), 25 to 45 (WTYF…LMVS), 99 to 119 (GALF…FGFN), 124 to 144 (LGVL…SLMW), 266 to 286 (FAFL…GVFY), and 490 to 510 (FLDL…SAED).

It localises to the cell membrane. This is an uncharacterized protein from Haemophilus influenzae (strain ATCC 51907 / DSM 11121 / KW20 / Rd).